Consider the following 210-residue polypeptide: dTTP/UTP pyrophosphatase (210 aa).

The active-site Proton acceptor is aspartate 89.

This sequence belongs to the Maf family. YhdE subfamily. The cofactor is a divalent metal cation.

It is found in the cytoplasm. It carries out the reaction dTTP + H2O = dTMP + diphosphate + H(+). The enzyme catalyses UTP + H2O = UMP + diphosphate + H(+). In terms of biological role, nucleoside triphosphate pyrophosphatase that hydrolyzes dTTP and UTP. May have a dual role in cell division arrest and in preventing the incorporation of modified nucleotides into cellular nucleic acids. The polypeptide is dTTP/UTP pyrophosphatase (Burkholderia thailandensis (strain ATCC 700388 / DSM 13276 / CCUG 48851 / CIP 106301 / E264)).